The sequence spans 240 residues: Protein FANTASTIC FOUR 2 (240 aa).

Disordered stretches follow at residues 89-124 (TTPRAPPRQLKPQEDTNLPDKTPPMSRNNSFPPPIK) and 177-229 (LLSH…KPML). Residues 117 to 171 (NSFPPPIKFVEDSKYNRMVRWLGEDGRIVVQAIRVSSPPSCFVSERGEGRLRLIL) form the FAF domain. Over residues 184–200 (EEEEEETEEGIDEETSE) the composition is skewed to acidic residues. The span at 207–216 (GNKKFSRFSR) shows a compositional bias: basic residues. A compositionally biased stretch (basic and acidic residues) spans 217 to 226 (RCKENGREPK).

This sequence belongs to the fantastic four family. In terms of tissue distribution, expressed in the shoot apex, stamens, carpels and young siliques. Detected in provascular and vascular tissue, and in the center of the vegetative and inflorescence meristems. Expressed in the funiculus. In roots and leaves, predominantly expressed in phloem.

Regulates the size of the shoot meristem by modulating the CLV3-WUS feedback loop. Can repress WUS but is under negative control by CLV3. The sequence is that of Protein FANTASTIC FOUR 2 (FAF2) from Arabidopsis thaliana (Mouse-ear cress).